A 177-amino-acid polypeptide reads, in one-letter code: Large ribosomal subunit protein uL6 (177 aa).

It belongs to the universal ribosomal protein uL6 family. Part of the 50S ribosomal subunit.

Its function is as follows. This protein binds to the 23S rRNA, and is important in its secondary structure. It is located near the subunit interface in the base of the L7/L12 stalk, and near the tRNA binding site of the peptidyltransferase center. This chain is Large ribosomal subunit protein uL6, found in Hahella chejuensis (strain KCTC 2396).